Consider the following 725-residue polypeptide: Catalase-peroxidase (725 aa).

A cross-link (tryptophyl-tyrosyl-methioninium (Trp-Tyr) (with M-237)) is located at residues 88-211; that stretch reads WHSAGTYRIQ…LAASEMGLIY (124 aa). Catalysis depends on His89, which acts as the Proton acceptor. The tryptophyl-tyrosyl-methioninium (Tyr-Met) (with W-88) cross-link spans 211 to 237; it reads YVNPEGPGREPDPLKAAQQIRETFKRM. Heme b is bound at residue His252.

The protein belongs to the peroxidase family. Peroxidase/catalase subfamily. In terms of assembly, homodimer or homotetramer. The cofactor is heme b. In terms of processing, formation of the three residue Trp-Tyr-Met cross-link is important for the catalase, but not the peroxidase activity of the enzyme.

The enzyme catalyses H2O2 + AH2 = A + 2 H2O. It catalyses the reaction 2 H2O2 = O2 + 2 H2O. Its function is as follows. Bifunctional enzyme with both catalase and broad-spectrum peroxidase activity. The protein is Catalase-peroxidase of Symbiobacterium thermophilum (strain DSM 24528 / JCM 14929 / IAM 14863 / T).